We begin with the raw amino-acid sequence, 603 residues long: Nuclear receptor subfamily 2 group C member 1 (603 aa).

Residues 1–178 (MATIEEIAHQ…RLQRCIAFGM (178 aa)) are required for interaction with KAT2B. Positions 110-185 (FDLCVVCGDK…FGMKQDSVQC (76 aa)) form a DNA-binding region, nuclear receptor. 2 consecutive NR C4-type zinc fingers follow at residues 113–133 (CVVCGDKASGRHYGAVTCEGC) and 149–173 (CRGSKDCIINKHHRNRCQYCRLQRC). A phosphoserine mark is found at S197 and S215. The residue at position 220 (T220) is a Phosphothreonine. The residue at position 222 (T222) is a Phosphothreonine; by MAPK1. K250 participates in a covalent cross-link: Glycyl lysine isopeptide (Lys-Gly) (interchain with G-Cter in SUMO2). An NR LBD domain is found at 348-590 (GSVHLITGDS…SVIPHILKME (243 aa)). The residue at position 581 (S581) is a Phosphoserine; by PKC. Residues 584–603 (PHILKMEPADYNSQIIGHSI) form a required for interaction with NRIP1 region. K588 participates in a covalent cross-link: Glycyl lysine isopeptide (Lys-Gly) (interchain with G-Cter in SUMO2).

It belongs to the nuclear hormone receptor family. NR2 subfamily. In terms of assembly, homodimer. Heterodimer; binds DNA as a heterodimer with NR2C2 required for chromatin remodeling and for binding to promoter regions such as globin DR1 repeats. Interacts with NRIP1 (via its LXXLL motifs); the interaction provides corepressor activity. Interacts with HDAC3 (via the DNA-binding domain). Interacts with HDAC4 (via the DNA-binding domain). Interacts with PIAS1; the interaction is required for sumoylation of NR2C1. Interacts with UBE2I; the interaction is required for sumoylation of NR2C1. Interacts with KAT2B; the interaction acts as a corepressor of gene expression. Interacts with ESR1; the interaction prevents homodimerization of ESR1 and suppresses its transcriptional activity and cell growth. In terms of processing, sumoylation requires both PIAS1 and UBE2I. Sumoylation appears to dissociate NR2C1 from the PML nuclear bodies. Enhances the interaction with NRIP1 but inhibits interaction with KAT2B. In proliferating cells, stimulation by all-trans retinoic acid, activation of MAPK1-mediated phosphorylation and recruitment to PML bodies with subsequent sumoylation, suppresses OCT4 expression. Phosphorylated on several serine and threonine residues. Phosphorylation on Thr-222, stimulated by all-trans retinoic acid (atRA) mediates PML location and sumoylation in proliferating cells which then modulates its association with effector molecules, KAT2B and NRIP1. Phosphorylation on Ser-581 by PKC is important for protein stability and function as activator of RARB.

Its subcellular location is the nucleus. It localises to the PML body. Functionally, orphan nuclear receptor. Binds the IR7 element in the promoter of its own gene in an autoregulatory negative feedback mechanism. Primarily repressor of a broad range of genes. Binds to hormone response elements (HREs) consisting of two 5'-AGGTCA-3' half site direct repeat consensus sequences. Together with NR2C2, forms the core of the DRED (direct repeat erythroid-definitive) complex that represses embryonic and fetal globin transcription. Also activator of OCT4 gene expression. May be involved in stem cell proliferation and differentiation. Mediator of retinoic acid-regulated preadipocyte proliferation. This Homo sapiens (Human) protein is Nuclear receptor subfamily 2 group C member 1 (NR2C1).